A 130-amino-acid polypeptide reads, in one-letter code: Small ribosomal subunit protein uS11 (130 aa).

The protein belongs to the universal ribosomal protein uS11 family. Part of the 30S ribosomal subunit. Interacts with proteins S7 and S18. Binds to IF-3.

Its function is as follows. Located on the platform of the 30S subunit, it bridges several disparate RNA helices of the 16S rRNA. Forms part of the Shine-Dalgarno cleft in the 70S ribosome. This is Small ribosomal subunit protein uS11 from Thermoanaerobacter sp. (strain X514).